A 190-amino-acid polypeptide reads, in one-letter code: FMN reductase (NADH) RutF (190 aa).

The protein belongs to the non-flavoprotein flavin reductase family. RutF subfamily.

It carries out the reaction FMNH2 + NAD(+) = FMN + NADH + 2 H(+). Its function is as follows. Catalyzes the reduction of FMN to FMNH2 which is used to reduce pyrimidine by RutA via the Rut pathway. In Pantoea ananatis (strain LMG 20103), this protein is FMN reductase (NADH) RutF.